The following is a 166-amino-acid chain: Cofilin-1 (166 aa).

The residue at position 2 (Ala-2) is an N-acetylalanine. Ser-3 bears the Phosphoserine; by NRK mark. Residues 4–153 (GVAVSDGVIK…KDRCTLAEKL (150 aa)) form the ADF-H domain. Ser-8 carries the post-translational modification Phosphoserine. The residue at position 13 (Lys-13) is an N6-acetyllysine. The residue at position 25 (Thr-25) is a Phosphothreonine. The Nuclear localization signal motif lies at 30–34 (KKRKK). Residue Ser-41 is modified to Phosphoserine. Thr-63 is subject to Phosphothreonine. The residue at position 68 (Tyr-68) is a Phosphotyrosine. Lys-73 is modified (N6-acetyllysine). Position 82 is a phosphotyrosine (Tyr-82). The residue at position 108 (Ser-108) is a Phosphoserine. Lys-132 participates in a covalent cross-link: Glycyl lysine isopeptide (Lys-Gly) (interchain with G-Cter in SUMO2). Tyr-140 bears the Phosphotyrosine mark. Position 144 is an N6-acetyllysine (Lys-144). Ser-156 bears the Phosphoserine mark.

Belongs to the actin-binding proteins ADF family. In terms of assembly, can bind G- and F-actin in a 1:1 ratio of cofilin to actin. It is a major component of intranuclear and cytoplasmic actin rods. Interacts with the subcortical maternal complex (SCMC) via interaction with TLE6 isoform 1 and NLRP5. Interacts with C9orf72. As to quaternary structure, (Microbial infection) Interacts with human respiratory syncytial virus (HRSV) matrix protein; this interaction probably facilitates viral replication. In terms of processing, inactivated by phosphorylation on Ser-3. Phosphorylated on Ser-3 in resting cells. Dephosphorylated by PDXP/chronophin; this restores its activity in promoting actin filament depolymerization. The phosphorylation of Ser-24 may prevent recognition of the nuclear localization signal. Phosphorylated via a ARRB1-RAC1-LIMK1-PAK1 cascade upon active ligand stimulation of atypical chemokine receptor ACKR2. As to expression, widely distributed in various tissues.

It localises to the nucleus matrix. Its subcellular location is the cytoplasm. The protein localises to the cytoskeleton. The protein resides in the cell projection. It is found in the ruffle membrane. It localises to the lamellipodium membrane. Its subcellular location is the lamellipodium. The protein localises to the growth cone. The protein resides in the axon. In terms of biological role, binds to F-actin and exhibits pH-sensitive F-actin depolymerizing activity. In conjunction with the subcortical maternal complex (SCMC), plays an essential role for zygotes to progress beyond the first embryonic cell divisions via regulation of actin dynamics. Required for the centralization of the mitotic spindle and symmetric division of zygotes. Plays a role in the regulation of cell morphology and cytoskeletal organization in epithelial cells. Required for the up-regulation of atypical chemokine receptor ACKR2 from endosomal compartment to cell membrane, increasing its efficiency in chemokine uptake and degradation. Required for neural tube morphogenesis and neural crest cell migration. The chain is Cofilin-1 (CFL1) from Homo sapiens (Human).